A 459-amino-acid polypeptide reads, in one-letter code: LAS seventeen-binding protein 3 (459 aa).

The tract at residues 219–403 (RPSNGGRGSF…APTSPSTSSP (185 aa)) is disordered. At serine 227 the chain carries Phosphoserine. Over residues 229 to 242 (DDDEDDYYDDDDYY) the composition is skewed to acidic residues. Over residues 243–262 (NDIPSSFSSTDASSTRPNTR) the composition is skewed to low complexity. The segment covering 289-300 (YSRNSRLAPTNS) has biased composition (polar residues). Position 298 is a phosphothreonine (threonine 298). Serine 300 and serine 303 each carry phosphoserine. Positions 340–350 (DEYDDYDDDYE) are enriched in acidic residues. Residues 351–371 (SGYRRGNGRDRTKDREVDDLS) are compositionally biased toward basic and acidic residues. Positions 372-391 (NRFSKSRISSASTPQTSQGR) are enriched in polar residues. At threonine 393 the chain carries Phosphothreonine. Low complexity predominate over residues 393–403 (TAPTSPSTSSP). A phosphoserine mark is found at serine 397, serine 402, and serine 416. Residues 400 to 459 (TSSPKAVALYSFAGEESGDLPFRKGDVITILKKSDSQNDWWTGRVNGREGIFPANYVELV) form the SH3 domain.

The protein belongs to the SH3YL1 family. Interacts with LAS17. Phosphorylation of Ser-397 is induced 2-fold in response to mating pheromone.

The protein resides in the cytoplasm. The polypeptide is LAS seventeen-binding protein 3 (LSB3) (Saccharomyces cerevisiae (strain YJM789) (Baker's yeast)).